Reading from the N-terminus, the 447-residue chain is Glutamyl-tRNA reductase (447 aa).

Residues 56–59, serine 119, 124–126, and glutamine 130 each bind substrate; these read TCNR and ETQ. Cysteine 57 serves as the catalytic Nucleophile. 201 to 206 contributes to the NADP(+) binding site; sequence GLGEMS.

The protein belongs to the glutamyl-tRNA reductase family. As to quaternary structure, homodimer.

It catalyses the reaction (S)-4-amino-5-oxopentanoate + tRNA(Glu) + NADP(+) = L-glutamyl-tRNA(Glu) + NADPH + H(+). It participates in porphyrin-containing compound metabolism; protoporphyrin-IX biosynthesis; 5-aminolevulinate from L-glutamyl-tRNA(Glu): step 1/2. Catalyzes the NADPH-dependent reduction of glutamyl-tRNA(Glu) to glutamate 1-semialdehyde (GSA). The protein is Glutamyl-tRNA reductase of Helicobacter acinonychis (strain Sheeba).